The chain runs to 158 residues: Nascent polypeptide-associated complex subunit beta (158 aa).

Disordered regions lie at residues 1-40 (MDQAKLARLQQSVRIGKGKGTPRRKTKKVHKSSGTDDKKL) and 119-158 (ESYQSMQKGEGGEDAKKDDDDDDDEIPDLVEGENFESKVE). The span at 16–31 (GKGKGTPRRKTKKVHK) shows a compositional bias: basic residues. In terms of domain architecture, NAC-A/B spans 34 to 99 (GTDDKKLQTS…GEDKELTELV (66 aa)). Residues 137 to 152 (DDDDDDEIPDLVEGEN) are compositionally biased toward acidic residues.

Belongs to the NAC-beta family. Part of the nascent polypeptide-associated complex (NAC), consisting of EGD2 and EGD1. NAC associates with ribosomes via EGD1.

The protein resides in the cytoplasm. Its subcellular location is the nucleus. Component of the nascent polypeptide-associated complex (NAC), a dynamic component of the ribosomal exit tunnel, protecting the emerging polypeptides from interaction with other cytoplasmic proteins to ensure appropriate nascent protein targeting. The NAC complex also promotes mitochondrial protein import by enhancing productive ribosome interactions with the outer mitochondrial membrane and blocks the inappropriate interaction of ribosomes translating non-secretory nascent polypeptides with translocation sites in the membrane of the endoplasmic reticulum. EGD1 may act as a transcription factor that exert a negative effect on the expression of several genes that are transcribed by RNA polymerase II. The sequence is that of Nascent polypeptide-associated complex subunit beta (EGD1) from Ajellomyces capsulatus (strain NAm1 / WU24) (Darling's disease fungus).